Here is a 336-residue protein sequence, read N- to C-terminus: Cytoskeleton protein RodZ (336 aa).

The Cytoplasmic portion of the chain corresponds to 1-111 (MNTEATHDQN…LGKRRKKRDG (111 aa)). Positions 19 to 71 (LRNAREQLGLSQQAVAERLCLKVSTVRDIEEDKAPSDLASTFLRGYIRSYARL) constitute an HTH cro/C1-type domain. The H-T-H motif DNA-binding region spans 30 to 49 (QQAVAERLCLKVSTVRDIEE). A helical; Signal-anchor for type II membrane protein membrane pass occupies residues 112–132 (WLMSFTWLVLFVVVGLTGAWW). The Periplasmic segment spans residues 133 to 336 (WQNHKAQQEE…TLNAEPTPAQ (204 aa)). The tract at residues 155–243 (NADKDSGQSV…PSALPTSQAG (89 aa)) is disordered. Polar residues predominate over residues 161–175 (GQSVPLDTGAVTSQD). Low complexity-rich tracts occupy residues 176–214 (TTPAQTAPAPATPVDSTAATQTQTPAPTAAATQNTVVAP) and 221–243 (TAATSAAPAATETPSALPTSQAG).

It belongs to the RodZ family.

The protein localises to the cell inner membrane. In terms of biological role, cytoskeletal protein that is involved in cell-shape control through regulation of the length of the long axis. The protein is Cytoskeleton protein RodZ of Salmonella newport (strain SL254).